The following is a 155-amino-acid chain: Transcription antitermination protein NusB (155 aa).

It belongs to the NusB family.

Its function is as follows. Involved in transcription antitermination. Required for transcription of ribosomal RNA (rRNA) genes. Binds specifically to the boxA antiterminator sequence of the ribosomal RNA (rrn) operons. The polypeptide is Transcription antitermination protein NusB (Mesorhizobium japonicum (strain LMG 29417 / CECT 9101 / MAFF 303099) (Mesorhizobium loti (strain MAFF 303099))).